The chain runs to 79 residues: MNTKLVVVFLLSAILFVSVTASRPGKDLERDEAYETYDDENKRACKDVFPAATCRHAKSVGNCSSEKYKRNCAITCGAC.

Positions 1–21 (MNTKLVVVFLLSAILFVSVTA) are cleaved as a signal peptide. A propeptide spanning residues 22–43 (SRPGKDLERDEAYETYDDENKR) is cleaved from the precursor. The ShKT domain maps to 45–79 (CKDVFPAATCRHAKSVGNCSSEKYKRNCAITCGAC). Intrachain disulfides connect Cys45–Cys79, Cys54–Cys72, and Cys63–Cys76. Positions 67–68 (KY) are crucial for binding to potassium channels.

It belongs to the sea anemone type 1 potassium channel toxin family. Type 1b subfamily. Two similar peptides (OspTx2a-p1 and -p2) are obtained after synthesis and oxidative folding. They may differ by a D-Cys at position 76 (corresponding to OspTx2a-p2). Since C-terminal Cys residues are prone to racemization during solid-phase peptide synthesis, and if the presence of a D-amino acid is correct, it is probable that OspTx2a-p1 (L-Cys-76 form) corresponds to the native peptide.

It is found in the secreted. Functionally, toxin that weakly blocks the two voltage-gated potassium channels on Kv1.2/KCNA2 (IC(50)=1.8-2.5 uM) and Kv1.6/KCNA6 (IC(50)=5.6-6.2 uM). This is U-actitoxin-Oulsp1 from Oulactis sp. (Sea anemone).